Reading from the N-terminus, the 327-residue chain is GPI-linked NAD(P)(+)--arginine ADP-ribosyltransferase 1 (327 aa).

Residues 1-22 (MQMPAMMSLLLVSVGLMEALQA) form the signal peptide. 2 cysteine pairs are disulfide-bonded: Cys53–Cys277 and Cys174–Cys224. The N-linked (GlcNAc...) asparagine glycan is linked to Asn65. A TR mART core domain is found at 73–273 (QVYADSWTLA…IYLRALGKHS (201 aa)). NAD(+) is bound by residues Tyr121 and Arg179. Residues Arg179 and Ser202 contribute to the active site. Residue Ser233 coordinates NAD(+). Residue Glu240 is part of the active site. An N-linked (GlcNAc...) asparagine glycan is attached at Asn253. Ser295 carries the GPI-anchor amidated serine lipid modification. Residues 296–327 (AMGQSPLSAVWSLLLLLWFLVVRAFPDGPGLL) constitute a propeptide, removed in mature form.

This sequence belongs to the Arg-specific ADP-ribosyltransferase family.

It is found in the sarcoplasmic reticulum membrane. It catalyses the reaction L-arginyl-[protein] + NAD(+) = N(omega)-(ADP-D-ribosyl)-L-arginyl-[protein] + nicotinamide + H(+). Its function is as follows. Has ADP-ribosyltransferase activity toward GLP1R. The chain is GPI-linked NAD(P)(+)--arginine ADP-ribosyltransferase 1 (ART1) from Homo sapiens (Human).